We begin with the raw amino-acid sequence, 1412 residues long: Erbin (1412 aa).

LRR repeat units follow at residues 23–44 (TVTT…IFTF), 47–68 (TLEE…LFNC), 70–91 (SLHK…IANL), 93–114 (NLRE…IKNC), 116–137 (VLTI…FSQL), 139–161 (NLTQ…GRLT), 162–183 (KLQI…MNRL), 185–206 (QLER…LEQL), 208–229 (GLKE…IGSL), 231–252 (QLTY…ISTC), 254–275 (NLQD…IGSL), 277–298 (NITT…IGGL), 300–321 (SVEE…IGQL), 323–344 (NLRT…IGSW), 346–367 (NITV…MGDM), 369–391 (KLKV…TKLQ), and 392–413 (QLTA…QKET). Residues Ser440 and Ser444 each carry the phosphoserine modification. Disordered regions lie at residues 464–489 (CDED…PYPD) and 506–542 (KDEE…TTTV). Basic and acidic residues predominate over residues 470–480 (EREAPPREGNL). Tyr483 is modified (phosphotyrosine). A Phosphothreonine modification is found at Thr485. Residues 506-532 (KDEETNEDSGRDLKPHEDQQDINKDVG) show a composition bias toward basic and acidic residues. Residues 533-542 (VKTSESTTTV) are compositionally biased toward low complexity. 5 positions are modified to phosphoserine: Ser569, Ser598, Ser602, Ser603, and Ser620. Residues 615 to 681 (PLIETSINQP…TDSSQDTSLC (67 aa)) form a disordered region. The span at 632–641 (NKKDDTKETD) shows a compositional bias: basic and acidic residues. Over residues 650–662 (NSNQNNSNCSSPS) the composition is skewed to low complexity. Polar residues predominate over residues 663-681 (RMSDSVSLNTDSSQDTSLC). Ser715 carries the post-translational modification Phosphoserine. Residues 803–867 (ETEHLENGNK…PQKSGPVGSV (65 aa)) form a disordered region. Polar residues predominate over residues 817–835 (ESVNKVNGHSEETSQSPNR). Phosphoserine occurs at positions 852, 857, and 872. Thr917 carries the post-translational modification Phosphothreonine. Tyr920 carries the phosphotyrosine modification. Position 931 is a phosphoserine (Ser931). Tyr972 carries the post-translational modification Phosphotyrosine. 2 disordered regions span residues 997-1021 (NPQI…NQSY) and 1075-1192 (QRQS…KSKV). Polar residues predominate over residues 1075–1086 (QRQSSVSSTASV). At Tyr1104 the chain carries Phosphotyrosine. Polar residues predominate over residues 1157–1171 (MSVSDFNYSRTSPSK). A phosphoserine mark is found at Ser1158, Ser1179, and Ser1286. Residues 1321–1410 (EIRVRVEKDP…TVELIIVREV (90 aa)) enclose the PDZ domain.

It belongs to the LAP (LRR and PDZ) protein family. As to quaternary structure, interacts with ERBB2, BPAG1 and ITGB4. May favor the localization of ERBB2, by restricting its presence to the basolateral membrane of epithelial cells. Also found to interact with ARVCF and delta catenin. Interacts (via C-terminus) with DST Isoform 3 (via N-terminus). Interacts with NOD2 (via CARD domain). Highly expressed in brain, heart, kidney, muscle and stomach, followed by liver, spleen and intestine.

It is found in the cell junction. It localises to the hemidesmosome. The protein localises to the nucleus membrane. The protein resides in the basolateral cell membrane. Acts as an adapter for the receptor ERBB2, in epithelia. By binding the unphosphorylated 'Tyr-1248' of receptor ERBB2, it may contribute to stabilize this unphosphorylated state. Inhibits NOD2-dependent NF-kappa-B signaling and pro-inflammatory cytokine secretion. This chain is Erbin, found in Homo sapiens (Human).